Consider the following 457-residue polypeptide: Glutamate--tRNA ligase 1 (457 aa).

Positions 9-19 (PSPTGYIHIGN) match the 'HIGH' region motif. The short motif at 250–254 (GLSKR) is the 'KMSKS' region element. Lys-253 contacts ATP.

It belongs to the class-I aminoacyl-tRNA synthetase family. Glutamate--tRNA ligase type 1 subfamily. Monomer.

Its subcellular location is the cytoplasm. It carries out the reaction tRNA(Glu) + L-glutamate + ATP = L-glutamyl-tRNA(Glu) + AMP + diphosphate. Catalyzes the attachment of glutamate to tRNA(Glu) in a two-step reaction: glutamate is first activated by ATP to form Glu-AMP and then transferred to the acceptor end of tRNA(Glu). The protein is Glutamate--tRNA ligase 1 of Brucella abortus (strain S19).